The primary structure comprises 365 residues: Cytosolic 5'-nucleotidase 1A (365 aa).

Residues 1-11 (MEPGQPREARE) are compositionally biased toward basic and acidic residues. A disordered region spans residues 1 to 23 (MEPGQPREAREPGPGAETAAVPR). Aspartate 208 acts as the Nucleophile in catalysis.

This sequence belongs to the 5'-nucleotidase type 3 family. The cofactor is Mg(2+).

Its subcellular location is the cytoplasm. It carries out the reaction a ribonucleoside 5'-phosphate + H2O = a ribonucleoside + phosphate. The enzyme catalyses a 2'-deoxyribonucleoside 5'-phosphate + H2O = a 2'-deoxyribonucleoside + phosphate. It catalyses the reaction IMP + H2O = inosine + phosphate. The catalysed reaction is AMP + H2O = adenosine + phosphate. It carries out the reaction dCMP + H2O = 2'-deoxycytidine + phosphate. Activated by ADP. Catalyzes the hydrolysis of ribonucleotide and deoxyribonucleotide monophosphates, releasing inorganic phosphate and the corresponding nucleoside. AMP is the major substrate but can also hydrolyze dCMP and IMP. The protein is Cytosolic 5'-nucleotidase 1A (Nt5c1a) of Mus musculus (Mouse).